Reading from the N-terminus, the 163-residue chain is MSIEMTVSEIAEVLGLSRQAINNRVKELPEEDTDKNDKGVTVVTRSGLIKLEEIYKKTIFEDEPVSEDVKQRELMEILVDEKNAEILRLYEQLKAKDRQLSEKDEQMRIKDRQIAEKDKQLDQQQQLTLQAMKDQENLKLELDQAKEEVQSTKKGFFARLFGG.

Interacts with CpsD and ParB.

The protein localises to the cytoplasm. It is found in the nucleoid. The protein resides in the cell membrane. Functionally, required for cell division and chromosome segregation. Binds to DNA and is involved in segregating the origin of replication (oriC) region to new daughter cells. When the nucleoid is not properly segregated, involved in blocking the cell division to protect the nucleoid against premature truncation by the newly forming septum, a function which is dependent on CpsD and its autophosphorylation level. The sequence is that of Regulator of chromosome segregation from Streptococcus pneumoniae serotype 2 (strain D39 / NCTC 7466).